Reading from the N-terminus, the 237-residue chain is Probable glutathione-independent glyoxalase SNO4 (237 aa).

Catalysis depends on residues C138, H139, and E170.

The protein belongs to the peptidase C56 family. HSP31-like subfamily. In terms of assembly, homodimer.

It localises to the cytoplasm. The protein localises to the P-body. The catalysed reaction is methylglyoxal + H2O = (R)-lactate + H(+). In terms of biological role, catalyzes the conversion of methylglyoxal (MG) to D-lactate in a single glutathione (GSH)-independent step. May play a role in detoxifying endogenously produced glyoxals. Involved in protection against reactive oxygen species (ROS). Important for viability in stationary phase. May negatively regulate TORC1 in response to nutrient limitation. This is Probable glutathione-independent glyoxalase SNO4 from Saccharomyces cerevisiae (strain ATCC 204508 / S288c) (Baker's yeast).